The following is a 284-amino-acid chain: Release factor glutamine methyltransferase (284 aa).

S-adenosyl-L-methionine is bound by residues 125 to 129 (GVGSG), glutamate 148, and asparagine 190. 190–193 (NPPY) contributes to the substrate binding site.

It belongs to the protein N5-glutamine methyltransferase family. PrmC subfamily.

It catalyses the reaction L-glutaminyl-[peptide chain release factor] + S-adenosyl-L-methionine = N(5)-methyl-L-glutaminyl-[peptide chain release factor] + S-adenosyl-L-homocysteine + H(+). Methylates the class 1 translation termination release factors RF1/PrfA and RF2/PrfB on the glutamine residue of the universally conserved GGQ motif. The protein is Release factor glutamine methyltransferase of Geobacter sulfurreducens (strain ATCC 51573 / DSM 12127 / PCA).